Consider the following 272-residue polypeptide: 3-methyl-2-oxobutanoate hydroxymethyltransferase (272 aa).

Residues D42 and D86 each coordinate Mg(2+). Residues 42–43, D86, and K116 contribute to the 3-methyl-2-oxobutanoate site; that span reads DS. E118 lines the Mg(2+) pocket. Residue E185 is the Proton acceptor of the active site.

This sequence belongs to the PanB family. In terms of assembly, homodecamer; pentamer of dimers. Mg(2+) serves as cofactor.

The protein localises to the cytoplasm. It catalyses the reaction 3-methyl-2-oxobutanoate + (6R)-5,10-methylene-5,6,7,8-tetrahydrofolate + H2O = 2-dehydropantoate + (6S)-5,6,7,8-tetrahydrofolate. Its pathway is cofactor biosynthesis; (R)-pantothenate biosynthesis; (R)-pantoate from 3-methyl-2-oxobutanoate: step 1/2. Its function is as follows. Catalyzes the reversible reaction in which hydroxymethyl group from 5,10-methylenetetrahydrofolate is transferred onto alpha-ketoisovalerate to form ketopantoate. In Prochlorococcus marinus (strain MIT 9303), this protein is 3-methyl-2-oxobutanoate hydroxymethyltransferase.